Reading from the N-terminus, the 152-residue chain is MFRGASAINLDTKGRIAIPVRYREPLQLEHQGRIVITVDIQSACLLLYPIHEWELIEAKLLKLSDTDKTQRSLKRLLLGYAHEVELDGNGRILLPPPLRQYANLDKRIMLVGQLNKFELWDEQSWLQQIDECQETIRSEELASNERLADFSL.

2 consecutive SpoVT-AbrB domains span residues 5-52 and 81-124; these read ASAI…PIHE and AHEV…DEQS.

This sequence belongs to the MraZ family. As to quaternary structure, forms oligomers.

It is found in the cytoplasm. The protein resides in the nucleoid. The polypeptide is Transcriptional regulator MraZ (Shewanella baltica (strain OS223)).